A 505-amino-acid chain; its full sequence is 2,3-bisphosphoglycerate-independent phosphoglycerate mutase (505 aa).

Mn(2+) is bound by residues Asp12 and Ser62. Ser62 serves as the catalytic Phosphoserine intermediate. Substrate is bound by residues His123, 153-154, Arg185, Arg191, 257-260, and Lys330; these read RD and RPDR. Mn(2+) contacts are provided by Asp397, His401, Asp438, His439, and His456.

It belongs to the BPG-independent phosphoglycerate mutase family. In terms of assembly, monomer. Mn(2+) serves as cofactor.

It carries out the reaction (2R)-2-phosphoglycerate = (2R)-3-phosphoglycerate. It participates in carbohydrate degradation; glycolysis; pyruvate from D-glyceraldehyde 3-phosphate: step 3/5. Functionally, catalyzes the interconversion of 2-phosphoglycerate and 3-phosphoglycerate. The chain is 2,3-bisphosphoglycerate-independent phosphoglycerate mutase from Staphylococcus haemolyticus (strain JCSC1435).